The primary structure comprises 325 residues: Beta-ketoacyl-[acyl-carrier-protein] synthase III 2 (325 aa).

Active-site residues include Cys-113 and His-250. Positions 251-255 (SANLR) are ACP-binding. Asn-280 is an active-site residue.

This sequence belongs to the thiolase-like superfamily. FabH family. Homodimer.

The protein localises to the cytoplasm. The catalysed reaction is 3-methylbutanoyl-CoA + malonyl-[ACP] + H(+) = 5-methyl-3-oxohexanoyl-[ACP] + CO2 + CoA. It carries out the reaction 2-methylpropanoyl-CoA + malonyl-[ACP] + H(+) = 4-methyl-3-oxopentanoyl-[ACP] + CO2 + CoA. The enzyme catalyses (2S)-2-methylbutanoyl-CoA + malonyl-[ACP] + H(+) = (4S)-4-methyl-3-oxohexanoyl-[ACP] + CO2 + CoA. It catalyses the reaction malonyl-[ACP] + acetyl-CoA + H(+) = 3-oxobutanoyl-[ACP] + CO2 + CoA. The catalysed reaction is malonyl-[ACP] + propanoyl-CoA + H(+) = 3-oxopentanoyl-[ACP] + CO2 + CoA. It carries out the reaction butanoyl-CoA + malonyl-[ACP] + H(+) = 3-oxohexanoyl-[ACP] + CO2 + CoA. The enzyme catalyses pentanoyl-CoA + malonyl-[ACP] + H(+) = 3-oxoheptanoyl-[ACP] + CO2 + CoA. It catalyses the reaction hexanoyl-CoA + malonyl-[ACP] + H(+) = 3-oxooctanoyl-[ACP] + CO2 + CoA. The catalysed reaction is heptanoyl-CoA + malonyl-[ACP] + H(+) = 3-oxononanoyl-[ACP] + CO2 + CoA. It participates in lipid metabolism; fatty acid biosynthesis. Its function is as follows. Catalyzes the condensation reaction of fatty acid synthesis by the addition to an acyl acceptor of two carbons from malonyl-ACP. Catalyzes the first condensation reaction which initiates fatty acid synthesis and may therefore play a role in governing the total rate of fatty acid production. Possesses both acetoacetyl-ACP synthase and acetyl transacylase activities. Has some substrate specificity for branched chain acyl-CoA, determining the biosynthesis of branched-chain of fatty acids instead of straight-chain. In Bacillus subtilis (strain 168), this protein is Beta-ketoacyl-[acyl-carrier-protein] synthase III 2.